Reading from the N-terminus, the 86-residue chain is Small ribosomal subunit protein uS17 (86 aa).

Belongs to the universal ribosomal protein uS17 family. As to quaternary structure, part of the 30S ribosomal subunit.

Functionally, one of the primary rRNA binding proteins, it binds specifically to the 5'-end of 16S ribosomal RNA. The sequence is that of Small ribosomal subunit protein uS17 from Lactococcus lactis subsp. cremoris (strain SK11).